A 264-amino-acid chain; its full sequence is Thymidylate synthase (264 aa).

Arg-21 serves as a coordination point for dUMP. His-51 provides a ligand contact to (6R)-5,10-methylene-5,6,7,8-tetrahydrofolate. 126–127 (RR) provides a ligand contact to dUMP. The active-site Nucleophile is the Cys-146. Residues 166–169 (RSCD), Asn-177, and 207–209 (HLY) each bind dUMP. Asp-169 contributes to the (6R)-5,10-methylene-5,6,7,8-tetrahydrofolate binding site. Ser-263 serves as a coordination point for (6R)-5,10-methylene-5,6,7,8-tetrahydrofolate.

This sequence belongs to the thymidylate synthase family. Bacterial-type ThyA subfamily. In terms of assembly, homodimer.

It is found in the cytoplasm. The enzyme catalyses dUMP + (6R)-5,10-methylene-5,6,7,8-tetrahydrofolate = 7,8-dihydrofolate + dTMP. Its pathway is pyrimidine metabolism; dTTP biosynthesis. Catalyzes the reductive methylation of 2'-deoxyuridine-5'-monophosphate (dUMP) to 2'-deoxythymidine-5'-monophosphate (dTMP) while utilizing 5,10-methylenetetrahydrofolate (mTHF) as the methyl donor and reductant in the reaction, yielding dihydrofolate (DHF) as a by-product. This enzymatic reaction provides an intracellular de novo source of dTMP, an essential precursor for DNA biosynthesis. The sequence is that of Thymidylate synthase from Buchnera aphidicola subsp. Schizaphis graminum (strain Sg).